The sequence spans 224 residues: Cytidylate kinase (224 aa).

11–19 (GPAGAGKST) provides a ligand contact to ATP.

Belongs to the cytidylate kinase family. Type 1 subfamily.

The protein resides in the cytoplasm. The catalysed reaction is CMP + ATP = CDP + ADP. The enzyme catalyses dCMP + ATP = dCDP + ADP. The protein is Cytidylate kinase of Exiguobacterium sp. (strain ATCC BAA-1283 / AT1b).